Consider the following 624-residue polypeptide: Kelch-like ECH-associated protein 1 (624 aa).

S-(2-succinyl)cysteine is present on Cys-38. The BTB domain maps to 77 to 149 (CDVTLQVKYE…AYTASISVGE (73 aa)). Arg-135 participates in a covalent cross-link: N5-[4-(S-L-cysteinyl)-5-methyl-1H-imidazol-2-yl]-L-ornithine (Arg-Cys) (interchain with C-151 in KEAP1). Cys-151 bears the S-(2,3-dicarboxypropyl)cysteine; alternate mark. Cys-151 is modified (S-(2-succinyl)cysteine; alternate). Cys-151 carries the S-nitrosocysteine; alternate modification. An N5-[4-(S-L-cysteinyl)-5-methyl-1H-imidazol-2-yl]-L-ornithine (Cys-Arg) (interchain with R-135 in KEAP1) cross-link involves residue Cys-151. The BACK domain occupies 184–286 (AIGIANFAEQ…TPRFLQTQLQ (103 aa)). At Cys-241 the chain carries S-(2-succinyl)cysteine. 2 positions are modified to S-(2,3-dicarboxypropyl)cysteine: Cys-257 and Cys-273. Cys-288 bears the S-(2,3-dicarboxypropyl)cysteine; alternate mark. Cys-288 bears the S-(2-succinyl)cysteine; alternate mark. An S-(2-succinyl)cysteine modification is found at Cys-319. 6 Kelch repeats span residues 327-372 (LIYT…VVGG), 373-423 (LLYA…VIDG), 424-470 (HIYA…VLNR), 471-517 (LLYA…VLHN), 519-564 (IYAA…VHQG), and 565-611 (KIYV…VTME). Cys-434 bears the S-cGMP-cysteine mark. Cys-613 bears the S-(2-succinyl)cysteine mark.

Belongs to the KEAP1 family. As to quaternary structure, component of the BCR(KEAP1) E3 ubiquitin ligase complex, at least composed of 2 molecules of CUL3, 2 molecules of KEAP1, and RBX1. Interacts with NFE2L2/NRF2; the interaction is direct. Forms a ternary complex with NFE2L2/NRF2 and PGAM5. Interacts with (phosphorylated) SQSTM1/p62; the interaction is direct and inactivates the BCR(KEAP1) complex by sequestering it in inclusion bodies, promoting its degradation. Interacts with NFE2L1. Interacts with BPTF and PTMA. Interacts with MAP1LC3B. Interacts indirectly with ENC1. Interacts with SESN1 and SESN2. Interacts with HSP90AA1 and HSP90AB1. Interacts with PGCKA1; this interaction prevents the ubiquitination of KEAP1 by TRIM25, thus protecting KEAP1 from degradation. In terms of processing, non-enzymatic covalent modifications of reactive cysteines by electrophile metabolites inactivate the BCR(KEAP1) complex. Accumulation of fumarate promotes the formation of cysteine S-succination (S-(2-succinyl)cysteine), leading to inactivate the BCR(KEAP1) complex and promote NFE2L2/NRF2 nuclear accumulation and activation. Nitric oxide-dependent 8-Nitro-cGMP formation promotes cysteine guanylation (S-cGMP-cysteine), leading to NFE2L2/NRF2 nuclear accumulation and activation. Itaconate, an anti-inflammatory metabolite generated in response to lipopolysaccharide, alkylates cysteines, activating NFE2L2/NRF2. Methylglyoxal, a reactive metabolite that accumulates when the glycolytic enzyme PGK1 is inhibited, promotes formation of a methylimidazole cross-link between proximal Cys-151 and Arg-135 on another KEAP1 molecule, resulting in an inactive dimer that inactivates the BCR(KEAP1) complex. Degraded via a proteasomal-independent process during selective autophagy: interaction with phosphorylated SQSTM1/p62 sequesters KEAP1 in inclusion bodies, leading to its degradation. Post-translationally, auto-ubiquitinated by the BCR(KEAP1) complex. Quinone-induced oxidative stress, but not sulforaphane, increases its ubiquitination. Ubiquitination and subsequent degradation is most pronounced following prolonged exposure of cells to oxidative stress, particularly in glutathione-deficient cells that are highly susceptible to oxidative stress. Deubiquitinated by USP25; leading to stabilization. Ubiquitinated by TRIM25; leading to degradation upon ER stress.

Its subcellular location is the cytoplasm. The protein localises to the nucleus. The protein operates within protein modification; protein ubiquitination. With respect to regulation, ubiquitin ligase activity of the BCR(KEAP1) complex is inhibited by oxidative stress and electrophile metabolites such as sulforaphane. Electrophile metabolites react with reactive cysteine residues in KEAP1 and trigger non-enzymatic covalent modifications of these cysteine residues, leading to inactivate the ubiquitin ligase activity of the BCR(KEAP1) complex. Selective autophagy also inactivates the BCR(KEAP1) complex via interaction between KEAP1 and SQSTM1/p62, which sequesters the complex in inclusion bodies and promotes its degradation. Substrate-specific adapter of a BCR (BTB-CUL3-RBX1) E3 ubiquitin ligase complex that regulates the response to oxidative stress by targeting NFE2L2/NRF2 for ubiquitination. KEAP1 acts as a key sensor of oxidative and electrophilic stress: in normal conditions, the BCR(KEAP1) complex mediates ubiquitination and degradation of NFE2L2/NRF2, a transcription factor regulating expression of many cytoprotective genes. In response to oxidative stress, different electrophile metabolites trigger non-enzymatic covalent modifications of highly reactive cysteine residues in KEAP1, leading to inactivate the ubiquitin ligase activity of the BCR(KEAP1) complex, promoting NFE2L2/NRF2 nuclear accumulation and expression of phase II detoxifying enzymes. In response to selective autophagy, KEAP1 is sequestered in inclusion bodies following its interaction with SQSTM1/p62, leading to inactivation of the BCR(KEAP1) complex and activation of NFE2L2/NRF2. The BCR(KEAP1) complex also mediates ubiquitination of SQSTM1/p62, increasing SQSTM1/p62 sequestering activity and degradation. The BCR(KEAP1) complex also targets BPTF and PGAM5 for ubiquitination and degradation by the proteasome. In Mus musculus (Mouse), this protein is Kelch-like ECH-associated protein 1.